The chain runs to 198 residues: Recombination protein RecR (198 aa).

The C4-type zinc-finger motif lies at 57–72; that stretch reads CSVCGHITDKDPCYIC. The region spanning 80–175 is the Toprim domain; sequence SVLCVVQESK…KVTRIAHGLP (96 aa).

The protein belongs to the RecR family.

Its function is as follows. May play a role in DNA repair. It seems to be involved in an RecBC-independent recombinational process of DNA repair. It may act with RecF and RecO. The sequence is that of Recombination protein RecR from Listeria innocua serovar 6a (strain ATCC BAA-680 / CLIP 11262).